The following is a 120-amino-acid chain: FK506-binding protein 1B (120 aa).

The segment at 1–26 (MGLEKQTLRMGNGKDHPQPGDPVELN) is disordered. The PPIase FKBP-type domain occupies 20–115 (GDPVELNYTG…VFEVELLKIK (96 aa)).

It belongs to the FKBP-type PPIase family. FKBP1 subfamily.

It catalyses the reaction [protein]-peptidylproline (omega=180) = [protein]-peptidylproline (omega=0). Its activity is regulated as follows. Inhibited by both FK506 and rapamycin. Functionally, PPIases accelerate the folding of proteins. It catalyzes the cis-trans isomerization of proline imidic peptide bonds in oligopeptides. This Aspergillus fumigatus (strain ATCC MYA-4609 / CBS 101355 / FGSC A1100 / Af293) (Neosartorya fumigata) protein is FK506-binding protein 1B (fpr1B).